The sequence spans 235 residues: uncharacterized protein (235 aa).

One can recognise an S4 RNA-binding domain in the interval 2-69; that stretch reads CRLAKIISNA…KPRLWIYYKP (68 aa). The active-site Nucleophile is aspartate 102.

The protein belongs to the pseudouridine synthase RsuA family.

It carries out the reaction a uridine in RNA = a pseudouridine in RNA. This is an uncharacterized protein from Rickettsia prowazekii (strain Madrid E).